The following is a 261-amino-acid chain: Mite allergen Der p 3 (261 aa).

An N-terminal signal peptide occupies residues 1–18 (MIIYNILIVLLLAINTLA). Positions 19–29 (NPILPASPNAT) are excised as a propeptide. Positions 30 to 260 (IVGGEKALAG…FIDWIESKRS (231 aa)) constitute a Peptidase S1 domain. A disulfide bridge links C54 with C70. Active-site charge relay system residues include H69 and D114. 2 disulfide bridges follow: C181/C198 and C210/C236. Residue S214 is the Charge relay system of the active site.

The protein belongs to the peptidase S1 family.

It is found in the secreted. In Dermatophagoides pteronyssinus (European house dust mite), this protein is Mite allergen Der p 3 (DERP3).